A 395-amino-acid polypeptide reads, in one-letter code: Elongation factor Tu (395 aa).

The tr-type G domain occupies 10–205 (KVHMNVGTIG…AMDSYFEDPV (196 aa)). The segment at 19-26 (GHVDHGKT) is G1. A GTP-binding site is contributed by 19 to 26 (GHVDHGKT). Thr-26 contacts Mg(2+). A G2 region spans residues 60 to 64 (GITIN). The interval 81–84 (DCPG) is G3. GTP-binding positions include 81–85 (DCPGH) and 136–139 (NKVD). The G4 stretch occupies residues 136–139 (NKVD). The interval 173 to 175 (SAF) is G5.

This sequence belongs to the TRAFAC class translation factor GTPase superfamily. Classic translation factor GTPase family. EF-Tu/EF-1A subfamily. In terms of assembly, monomer.

Its subcellular location is the cytoplasm. It carries out the reaction GTP + H2O = GDP + phosphate + H(+). Functionally, GTP hydrolase that promotes the GTP-dependent binding of aminoacyl-tRNA to the A-site of ribosomes during protein biosynthesis. This is Elongation factor Tu from Treponema pallidum (strain Nichols).